Here is a 267-residue protein sequence, read N- to C-terminus: Diphthine synthase (267 aa).

S-adenosyl-L-methionine-binding positions include Leu9, Asp85, Val88, 113-114 (SI), Leu170, Ala211, and His236.

The protein belongs to the diphthine synthase family. In terms of assembly, homodimer.

It catalyses the reaction 2-[(3S)-amino-3-carboxypropyl]-L-histidyl-[translation elongation factor 2] + 3 S-adenosyl-L-methionine = diphthine-[translation elongation factor 2] + 3 S-adenosyl-L-homocysteine + 3 H(+). The protein operates within protein modification; peptidyl-diphthamide biosynthesis. In terms of biological role, S-adenosyl-L-methionine-dependent methyltransferase that catalyzes the trimethylation of the amino group of the modified target histidine residue in translation elongation factor 2 (EF-2), to form an intermediate called diphthine. The three successive methylation reactions represent the second step of diphthamide biosynthesis. In Methanococcoides burtonii (strain DSM 6242 / NBRC 107633 / OCM 468 / ACE-M), this protein is Diphthine synthase.